The primary structure comprises 136 residues: Large-conductance mechanosensitive channel (136 aa).

At 1 to 16 (MGLLSEFKAFAVKGNV) the chain is on the cytoplasmic side. A helical membrane pass occupies residues 17 to 45 (VDMAVGIIIGAAFGKIVSSFVGDVIMPPI). The Extracellular portion of the chain corresponds to 46 to 73 (GLLIGGVDFSDLAITLKAEGDVPAVVLA). The helical transmembrane segment at 74 to 93 (YRKFIQTVLNFVIVAFAIFM) threads the bilayer. Residues 94–136 (GVKAINRLKREEAVAPSEPPVPSAEETLLTEIRDLLKAQQNKS) lie on the Cytoplasmic side of the membrane.

This sequence belongs to the MscL family. Homopentamer.

The protein localises to the cell inner membrane. Its function is as follows. Channel that opens in response to stretch forces in the membrane lipid bilayer. Forms a nonselective ion channel with a conductance of about 4 nanosiemens. May participate in the regulation of osmotic pressure changes within the cell. The polypeptide is Large-conductance mechanosensitive channel (Pseudomonas fluorescens).